The sequence spans 325 residues: Quinolinate synthase (325 aa).

Histidine 41 and serine 58 together coordinate iminosuccinate. Cysteine 103 is a binding site for [4Fe-4S] cluster. Residues tyrosine 129 to asparagine 131 and serine 146 each bind iminosuccinate. Cysteine 189 is a binding site for [4Fe-4S] cluster. Residues histidine 215 to glutamate 217 and threonine 232 contribute to the iminosuccinate site. Cysteine 282 is a binding site for [4Fe-4S] cluster.

Belongs to the quinolinate synthase family. Type 2 subfamily. [4Fe-4S] cluster serves as cofactor.

It localises to the cytoplasm. It carries out the reaction iminosuccinate + dihydroxyacetone phosphate = quinolinate + phosphate + 2 H2O + H(+). It participates in cofactor biosynthesis; NAD(+) biosynthesis; quinolinate from iminoaspartate: step 1/1. Catalyzes the condensation of iminoaspartate with dihydroxyacetone phosphate to form quinolinate. This is Quinolinate synthase from Rippkaea orientalis (strain PCC 8801 / RF-1) (Cyanothece sp. (strain PCC 8801)).